A 228-amino-acid chain; its full sequence is Prophenin-2 (228 aa).

An N-terminal signal peptide occupies residues 1-29; it reads METQRASLCLGRWSLWLLLLALVVPSASA. Residues 30-146 constitute a propeptide that is removed on maturation; it reads QALSYREAVL…FLRRPRLRRQ (117 aa). Cystine bridges form between cysteine 85/cysteine 96 and cysteine 107/cysteine 124. 7 tandem repeats follow at residues 148–157, 158–167, 168–177, 178–187, 188–197, 198–207, and 208–217. Residues 148 to 217 are 7 X 10 AA tandem repeats; that stretch reads FPPPNVPGPR…FPPPPPFRPP (70 aa). Disordered regions lie at residues 167 to 195 and 207 to 228; these read RFPPPNFPGPRFPPPNFPGPRFPPPNFPG and WFPPPPPFRPPPFGPPRFPGRR. The residue at position 225 (proline 225) is a Proline amide. Positions 226–228 are cleaved as a propeptide — removed in mature form; it reads GRR.

It belongs to the cathelicidin family.

The protein resides in the secreted. Exerts antimicrobial activity. It is more effective against Gram-negative bacteria than Gram-positive bacteria. The sequence is that of Prophenin-2 from Sus scrofa (Pig).